The sequence spans 359 residues: Phospho-N-acetylmuramoyl-pentapeptide-transferase (359 aa).

Helical transmembrane passes span 3–23 (QILI…PVLI), 55–75 (VAIV…GVVI), 84–104 (GLLV…DDLI), 117–137 (TAKT…ALQF), 156–176 (IATV…VVSA), 190–210 (LAAG…FWQF), 231–251 (LAII…WNAA), 255–275 (IFMG…LSVT), 283–303 (VVLG…ILAF), and 330–350 (VIIR…ALFY).

Belongs to the glycosyltransferase 4 family. MraY subfamily. Mg(2+) is required as a cofactor.

The protein localises to the cell membrane. It catalyses the reaction UDP-N-acetyl-alpha-D-muramoyl-L-alanyl-gamma-D-glutamyl-meso-2,6-diaminopimeloyl-D-alanyl-D-alanine + di-trans,octa-cis-undecaprenyl phosphate = di-trans,octa-cis-undecaprenyl diphospho-N-acetyl-alpha-D-muramoyl-L-alanyl-D-glutamyl-meso-2,6-diaminopimeloyl-D-alanyl-D-alanine + UMP. It participates in cell wall biogenesis; peptidoglycan biosynthesis. Functionally, catalyzes the initial step of the lipid cycle reactions in the biosynthesis of the cell wall peptidoglycan: transfers peptidoglycan precursor phospho-MurNAc-pentapeptide from UDP-MurNAc-pentapeptide onto the lipid carrier undecaprenyl phosphate, yielding undecaprenyl-pyrophosphoryl-MurNAc-pentapeptide, known as lipid I. The sequence is that of Phospho-N-acetylmuramoyl-pentapeptide-transferase from Mycolicibacterium vanbaalenii (strain DSM 7251 / JCM 13017 / BCRC 16820 / KCTC 9966 / NRRL B-24157 / PYR-1) (Mycobacterium vanbaalenii).